We begin with the raw amino-acid sequence, 430 residues long: Glutamate-1-semialdehyde 2,1-aminomutase (430 aa).

K265 carries the post-translational modification N6-(pyridoxal phosphate)lysine.

It belongs to the class-III pyridoxal-phosphate-dependent aminotransferase family. HemL subfamily. As to quaternary structure, homodimer. Pyridoxal 5'-phosphate serves as cofactor.

The protein resides in the cytoplasm. The catalysed reaction is (S)-4-amino-5-oxopentanoate = 5-aminolevulinate. It functions in the pathway porphyrin-containing compound metabolism; protoporphyrin-IX biosynthesis; 5-aminolevulinate from L-glutamyl-tRNA(Glu): step 2/2. In Shewanella baltica (strain OS223), this protein is Glutamate-1-semialdehyde 2,1-aminomutase.